The following is a 703-amino-acid chain: FERM domain-containing protein 7 (703 aa).

An FERM domain is found at 2-282 (LHLKVQFLDD…EYHAFFRLSE (281 aa)). A coiled-coil region spans residues 525 to 552 (RNMRIKSLQQDLQELQEAMARTSGRSNI).

In terms of tissue distribution, in the developing cerebral cortex, strong expression is observed in the ventricular and intermediate zones at 13 and 17 dpc. At 17 dpc and P0, expression appears to be restricted to the cortical plate. In neonates, highly expressed in cortex, hippocampus, cerebellum, olfactory bulb and eye with little or no expression in liver, kidney, skeletal muscle or heart muscle (at protein level).

The protein localises to the cell projection. Its subcellular location is the neuron projection. It is found in the growth cone. In terms of biological role, plays a role in neurite development, may be through the activation of the GTPase RAC1. Plays a role in the control of eye movement and gaze stability. This chain is FERM domain-containing protein 7, found in Mus musculus (Mouse).